Here is a 242-residue protein sequence, read N- to C-terminus: 3-deoxy-manno-octulosonate cytidylyltransferase (242 aa).

The protein belongs to the KdsB family.

The protein localises to the cytoplasm. The enzyme catalyses 3-deoxy-alpha-D-manno-oct-2-ulosonate + CTP = CMP-3-deoxy-beta-D-manno-octulosonate + diphosphate. It functions in the pathway nucleotide-sugar biosynthesis; CMP-3-deoxy-D-manno-octulosonate biosynthesis; CMP-3-deoxy-D-manno-octulosonate from 3-deoxy-D-manno-octulosonate and CTP: step 1/1. The protein operates within bacterial outer membrane biogenesis; lipopolysaccharide biosynthesis. In terms of biological role, activates KDO (a required 8-carbon sugar) for incorporation into bacterial lipopolysaccharide in Gram-negative bacteria. The chain is 3-deoxy-manno-octulosonate cytidylyltransferase from Mesorhizobium japonicum (strain LMG 29417 / CECT 9101 / MAFF 303099) (Mesorhizobium loti (strain MAFF 303099)).